A 388-amino-acid polypeptide reads, in one-letter code: D-alanyl-D-alanine carboxypeptidase DacD (388 aa).

An N-terminal signal peptide occupies residues 1–21 (MKRRLIIAASLFVFNLSSGFA). S63 functions as the Acyl-ester intermediate in the catalytic mechanism. The Proton acceptor role is filled by K66. S129 is an active-site residue. K232 lines the substrate pocket.

Belongs to the peptidase S11 family.

Its subcellular location is the cell inner membrane. It carries out the reaction Preferential cleavage: (Ac)2-L-Lys-D-Ala-|-D-Ala. Also transpeptidation of peptidyl-alanyl moieties that are N-acyl substituents of D-alanine.. The protein operates within cell wall biogenesis; peptidoglycan biosynthesis. Functionally, removes C-terminal D-alanyl residues from sugar-peptide cell wall precursors. This chain is D-alanyl-D-alanine carboxypeptidase DacD (dacD), found in Escherichia coli (strain K12).